A 103-amino-acid polypeptide reads, in one-letter code: uncharacterized protein (103 aa).

Its subcellular location is the plastid. It is found in the chloroplast. This is an uncharacterized protein from Auxenochlorella pyrenoidosa (Freshwater green alga).